The primary structure comprises 57 residues: Small ribosomal subunit protein bS21 (57 aa).

The disordered stretch occupies residues 34–57 (RKEHYIKPSVQKKNRQKNMRSKKR). A compositionally biased stretch (basic residues) spans 43–57 (VQKKNRQKNMRSKKR).

It belongs to the bacterial ribosomal protein bS21 family.

The polypeptide is Small ribosomal subunit protein bS21 (Aster yellows witches'-broom phytoplasma (strain AYWB)).